Consider the following 1912-residue polypeptide: Receptor-type tyrosine-protein phosphatase delta (1912 aa).

The first 20 residues, 1–20, serve as a signal peptide directing secretion; that stretch reads MVPVARPLSLLLTFFLCACA. At 21–1266 the chain is on the extracellular side; that stretch reads ETPPRFTRTP…PQPITDEEEG (1246 aa). 2 consecutive Ig-like C2-type domains span residues 24 to 114 and 126 to 224; these read PRFT…TRLT and PTID…ANLY. Cystine bridges form between Cys-45–Cys-98 and Cys-147–Cys-207. The tract at residues 181-189 is mini-exon peptide A9; sufficient for interaction with IL1RAPL1; sequence ESIGGTPIR. The segment at 227–230 is mini-exon peptide B; required for interaction with SLITRK2 and in the function in pre-synaptic differentiation; Acts as an adjustable linker to control relative positions and orientations of the PTPRD second and third immunoglobilin domains for their simultaneous interactions with the first immunoglobilin domain of IL1RAPL1 and IL1RAP; Modulates affinity for IL1RAPL1 and IL1RAP; that stretch reads ELRE. The Ig-like C2-type 3 domain occupies 236–318; it reads PRFSIPPTNH…GVIEAIAQIT (83 aa). 2 N-linked (GlcNAc...) asparagine glycosylation sites follow: Asn-254 and Asn-299. Residues Cys-257 and Cys-302 are joined by a disulfide bond. Fibronectin type-III domains follow at residues 325-415, 420-516, 518-607, 612-709, 714-822, 823-916, 921-1016, and 1020-1106; these read PPGT…TSEQ, APRD…TGVP, QPLN…TMQS, PPQD…TDED, PPRK…TTGA, VPGK…VPEE, FPQN…TLPV, and FAKN…TAPD. Residues Asn-724 and Asn-832 are each glycosylated (N-linked (GlcNAc...) asparagine). Residues 1267-1287 form a helical membrane-spanning segment; it reads LIWVVGPVLAVVFIICIVIAI. The Cytoplasmic portion of the chain corresponds to 1288–1912; the sequence is LLYKRKRAES…YLGSFDHYAT (625 aa). The segment at 1298-1319 is disordered; the sequence is ESRKSSLPNSKEVPSHHPTDPV. Positions 1310–1319 are enriched in basic and acidic residues; the sequence is VPSHHPTDPV. 2 Tyrosine-protein phosphatase domains span residues 1357–1612 and 1644–1903; these read FSQE…LLEA and MELE…ALEY. Residues Asp-1521, 1553–1559, and Gln-1597 each bind substrate; that span reads CSAGVGR. Catalysis depends on Cys-1553, which acts as the Phosphocysteine intermediate. Cys-1844 acts as the Phosphocysteine intermediate in catalysis.

This sequence belongs to the protein-tyrosine phosphatase family. Receptor class 2A subfamily. Interacts with PPFIA1, PPFIA2 and PPFIA3. Interacts (via extracellular domain) with SLITRK4 (via LRR 1 and 2 repeats). Interacts with SLITRK2; induces presynaptic differentiation. Interacts (via the second immunoglobilin domain) with IL1RAPL1 (via the first immunoglobilin domain); induces pre- and postsynaptic differentiation of neurons and synapse formation. Isoform G, isoform H, isoform I, isoform J, and isoform K do not interact with IL1RAPL1. Interacts (via the third immunoglobilin domain) with IL1RAP (via the first immunoglobilin domain); induces pre- and postsynaptic differentiation of neurons. Post-translationally, a cleavage occurs, separating the extracellular domain from the transmembrane segment. This process called 'ectodomain shedding' is thought to be involved in receptor desensitization, signal transduction and/or membrane localization. As to expression, brain, kidney, heart, and some B-cell lines.

The protein localises to the membrane. It catalyses the reaction O-phospho-L-tyrosyl-[protein] + H2O = L-tyrosyl-[protein] + phosphate. Functionally, can bidirectionally induce pre- and post-synaptic differentiation of neurons by mediating interaction with IL1RAP and IL1RAPL1 trans-synaptically. Involved in pre-synaptic differentiation through interaction with SLITRK2. The protein is Receptor-type tyrosine-protein phosphatase delta (Ptprd) of Mus musculus (Mouse).